The sequence spans 138 residues: ATP synthase epsilon chain (138 aa).

It belongs to the ATPase epsilon chain family. As to quaternary structure, F-type ATPases have 2 components, CF(1) - the catalytic core - and CF(0) - the membrane proton channel. CF(1) has five subunits: alpha(3), beta(3), gamma(1), delta(1), epsilon(1). CF(0) has three main subunits: a, b and c.

The protein localises to the cell inner membrane. Functionally, produces ATP from ADP in the presence of a proton gradient across the membrane. The polypeptide is ATP synthase epsilon chain (Geobacter sp. (strain M21)).